A 467-amino-acid polypeptide reads, in one-letter code: Glutamate--tRNA ligase (467 aa).

Positions 9 to 19 match the 'HIGH' region motif; that stretch reads PSPTGFLHIGG. A 'KMSKS' region motif is present at residues 241-245; the sequence is KLSKR. Position 244 (Lys244) interacts with ATP.

The protein belongs to the class-I aminoacyl-tRNA synthetase family. Glutamate--tRNA ligase type 1 subfamily. As to quaternary structure, monomer.

Its subcellular location is the cytoplasm. It carries out the reaction tRNA(Glu) + L-glutamate + ATP = L-glutamyl-tRNA(Glu) + AMP + diphosphate. In terms of biological role, catalyzes the attachment of glutamate to tRNA(Glu) in a two-step reaction: glutamate is first activated by ATP to form Glu-AMP and then transferred to the acceptor end of tRNA(Glu). This chain is Glutamate--tRNA ligase, found in Methylobacillus flagellatus (strain ATCC 51484 / DSM 6875 / VKM B-1610 / KT).